The following is a 218-amino-acid chain: Ras-related protein Rab-27B (218 aa).

An N-acetylthreonine modification is found at Thr-2. 16–24 (GDSGVGKTT) contacts GTP. Residues 38–46 (FITTVGIDF) carry the Effector region motif. Residues 74–78 (DTAGQ), 133–136 (NKAD), and 163–165 (SAA) contribute to the GTP site. Cys-123 and Cys-188 form a disulfide bridge. Residues 193–218 (HIPDTVNGSSSGKLDGEKSAEKKCAC) form a disordered region. Basic and acidic residues predominate over residues 206–218 (LDGEKSAEKKCAC). S-geranylgeranyl cysteine attachment occurs at residues Cys-216 and Cys-218. Cys-218 carries the post-translational modification Cysteine methyl ester.

It belongs to the small GTPase superfamily. Rab family. Interacts with SYTL2, SYTL4, MYRIP and MLPH. Interacts with RPH3A and RPH3A. Interacts (GDP-bound form preferentially) with DENND10. As to expression, expressed at an extraordinary high level (0.1% of total protein) in urothelium.

It is found in the membrane. Its subcellular location is the late endosome. It catalyses the reaction GTP + H2O = GDP + phosphate + H(+). With respect to regulation, regulated by guanine nucleotide exchange factors (GEFs) which promote the exchange of bound GDP for free GTP, GTPase activating proteins (GAPs) which increase the GTP hydrolysis activity, and GDP dissociation inhibitors which inhibit the dissociation of the nucleotide from the GTPase. Activated by GEFs such as DENND10. Small GTPase which cycles between active GTP-bound and inactive GDP-bound states. In its active state, binds to a variety of effector proteins to regulate homeostasis of late endocytic pathway, including endosomal positioning, maturation and secretion. Plays a role in NTRK2/TRKB axonal anterograde transport by facilitating the association of NTRK2/TRKB with KLC1. May be involved in targeting uroplakins to urothelial apical membranes. This Bos taurus (Bovine) protein is Ras-related protein Rab-27B (RAB27B).